Reading from the N-terminus, the 489-residue chain is MSAASQRVGAFGEEAGYHKGLKPRQLQMIGIGGAIGTGLFLGAGGRLAKAGPGLFLVYGVCGVFVFLILRALGELVLHRPSSGSFVSYAREFFGEKAAYAVGWMYFLHWAMTSIVDTTAIATYLQRWTIFTVVPQWILALIALTVVLSMNLISVEWFGELEFWAALIKVLALMAFLVVGTVFLAGRYPVDGHSTGLSLWNNHGGLFPTSWLPLLIVTSGVVFAYSAVELVGTAAGETAEPEKIMPRAINSVVARIAIFYVGSVALLALLLPYTAYKAGESPFVTFFSKIGFHGAGDLMNIVVLTAALSSLNAGLYSTGRVMHSIAMSGSAPRFTARMSKSGVPYGGIVLTAVITLFGVALNAFKPGEAFEIVLNMSALGIIAGWATIVLCQLRLHKLANAGIMQRPRFRMPFSPYSGYLTLLFLLVVLVTMASDKPIGTWTVATLIIVIPALTAGWYLVRKRVMAVARERLGHTGPFPAVANPPVRSRD.

The next 12 helical transmembrane spans lie at 25 to 45, 49 to 69, 100 to 120, 137 to 157, 162 to 182, 210 to 230, 255 to 275, 289 to 309, 344 to 364, 369 to 389, 413 to 433, and 439 to 459; these read QLQM…GAGG, KAGP…FLIL, AVGW…TTAI, ILAL…VEWF, FWAA…GTVF, WLPL…VELV, IAIF…YTAY, IGFH…ALSS, YGGI…NAFK, FEIV…TIVL, SPYS…TMAS, and TWTV…WYLV.

It belongs to the amino acid-polyamine-organocation (APC) superfamily. Amino acid transporter (AAT) (TC 2.A.3.1) family.

It localises to the cell membrane. The polypeptide is L-asparagine permease 1 (ansP1) (Mycobacterium tuberculosis (strain CDC 1551 / Oshkosh)).